The chain runs to 136 residues: Histone H3 (136 aa).

Residues 1–43 (MARTKQTARKNVGGKAPRKHIGQKSARKTASTTAGMKKPHRYR) form a disordered region. Lys-10 is subject to N6-methylated lysine. An N6-acetyllysine mark is found at Lys-15 and Lys-24. Residues 16-27 (APRKHIGQKSAR) show a composition bias toward basic residues. Lys-28 and Lys-37 each carry N6-methylated lysine.

Belongs to the histone H3 family. As to quaternary structure, the nucleosome is a histone octamer containing two molecules each of H2A, H2B, H3 and H4 assembled in one H3-H4 heterotetramer and two H2A-H2B heterodimers. The octamer wraps approximately 147 bp of DNA.

It localises to the nucleus. The protein localises to the chromosome. Functionally, core component of nucleosome. Nucleosomes wrap and compact DNA into chromatin, limiting DNA accessibility to the cellular machineries which require DNA as a template. Histones thereby play a central role in transcription regulation, DNA repair, DNA replication and chromosomal stability. DNA accessibility is regulated via a complex set of post-translational modifications of histones, also called histone code, and nucleosome remodeling. This chain is Histone H3, found in Euplotes crassus.